Consider the following 102-residue polypeptide: uncharacterized protein (102 aa).

This is an uncharacterized protein from Haemophilus influenzae (strain ATCC 51907 / DSM 11121 / KW20 / Rd).